A 197-amino-acid polypeptide reads, in one-letter code: Peptidyl-tRNA hydrolase (197 aa).

Tyr-18 contributes to the tRNA binding site. Residue His-23 is the Proton acceptor of the active site. TRNA is bound by residues Phe-69, Asn-71, and Asn-117.

It belongs to the PTH family. Monomer.

The protein localises to the cytoplasm. It carries out the reaction an N-acyl-L-alpha-aminoacyl-tRNA + H2O = an N-acyl-L-amino acid + a tRNA + H(+). In terms of biological role, hydrolyzes ribosome-free peptidyl-tRNAs (with 1 or more amino acids incorporated), which drop off the ribosome during protein synthesis, or as a result of ribosome stalling. Its function is as follows. Catalyzes the release of premature peptidyl moieties from peptidyl-tRNA molecules trapped in stalled 50S ribosomal subunits, and thus maintains levels of free tRNAs and 50S ribosomes. This Tolumonas auensis (strain DSM 9187 / NBRC 110442 / TA 4) protein is Peptidyl-tRNA hydrolase.